A 162-amino-acid chain; its full sequence is Corticoliberin (162 aa).

An N-terminal signal peptide occupies residues 1 to 24 (MKFQLWVSTGILLVSLLPCHECRA). A propeptide spanning residues 25-119 (FIKSPASSPG…QEDPTEKAKR (95 aa)) is cleaved from the precursor. Residues 91–122 (SQPGMRAASLDGADSPYSAQEDPTEKAKRAEE) form a disordered region. Positions 113–122 (PTEKAKRAEE) are enriched in basic and acidic residues. Residue Ile160 is modified to Isoleucine amide.

The protein belongs to the sauvagine/corticotropin-releasing factor/urotensin I family.

Its subcellular location is the secreted. Its function is as follows. This hormone from hypothalamus regulates the release of corticotropin from pituitary gland. In Xenopus laevis (African clawed frog), this protein is Corticoliberin (crh).